The primary structure comprises 277 residues: MARLALTVSYVGTRLAGWQIQARTDRPQPRTVQGELERIAERIVGAPVRLHGAGRTDSGVHAEAQVAHMDVPDHRADLDWQRAFNAGLPDDISVAAVVRVPDEFHARFDARGKTYTYRLWPERRWVPPRLAPFAWATGQLDMDAMDAAAAYLHGMHDFASFQNTGTDIVTTVRTVTRVARRHEGEAPVQPALPGAQPLAGAEETANAMAGGLRVMAWDFEADGFLKQMVRNMMGLLVAVGRGKLPPDAVPAILAARDRKTAPATAPAHGLTLTRVHY.

Catalysis depends on D57, which acts as the Nucleophile. A substrate-binding site is contributed by Y115.

The protein belongs to the tRNA pseudouridine synthase TruA family. Homodimer.

The enzyme catalyses uridine(38/39/40) in tRNA = pseudouridine(38/39/40) in tRNA. Its function is as follows. Formation of pseudouridine at positions 38, 39 and 40 in the anticodon stem and loop of transfer RNAs. The protein is tRNA pseudouridine synthase A of Nitratidesulfovibrio vulgaris (strain DSM 19637 / Miyazaki F) (Desulfovibrio vulgaris).